Reading from the N-terminus, the 331-residue chain is SERPKRVFNIYWNVPTFMCHQYGLYFDEVTNFNIKHNSKDNFQGDKIAIFYDPGEFPALLPLKYGKYKIRNGGVPQEGNITIHLQRFIEHLDKTYPNRNFSGIGVIDFERWRPIFRQNWGNMKIYKNFSIDLVRKEHPFWNKKMIELEASKRFEKYARLFMEETLKLAKKTRKQADWGYYGYPYCFNMSPTNFVPDCDVTAMRENDEMSWLFNNQNVLLPSVYVRRELTPDQRIGLVQGRVKEAVRISNNLKHSPKVFSYWWYVYQDETNTFLTETDVKKTFQEIVINGGDGIIIWGSSSDVNSLSKCMRLREYLLTVLGPIAVNVTEAVN.

2 cysteine pairs are disulfide-bonded: cysteine 19/cysteine 308 and cysteine 185/cysteine 197. An N-linked (GlcNAc...) asparagine glycan is attached at asparagine 79. Residue glutamate 109 is the Proton donor of the active site.

The protein belongs to the glycosyl hydrolase 56 family. As to expression, expressed by the venom gland.

It localises to the secreted. It catalyses the reaction Random hydrolysis of (1-&gt;4)-linkages between N-acetyl-beta-D-glucosamine and D-glucuronate residues in hyaluronate.. In terms of biological role, hydrolyzes high molecular weight hyaluronic acid to produce small oligosaccharides. This Vespa velutina (Asian yellow-legged hornet) protein is Hyaluronidase B.